The chain runs to 441 residues: tRNA (adenine(37)-N6)-methyltransferase (441 aa).

A TsaA-like domain is found at 30–168 (TEPVGYLESC…YIAEYDSPQN (139 aa)). S-adenosyl-L-methionine is bound by residues 47 to 49 (PRQ), 90 to 91 (HK), Arg117, Leu127, and 148 to 151 (IHGT). Residues 179–192 (QNNQHTPNTVSQSD) are compositionally biased toward polar residues. Disordered stretches follow at residues 179-231 (QNNQ…EENY) and 264-284 (SSVA…SEKG).

The protein belongs to the tRNA methyltransferase O family.

The catalysed reaction is N(6)-L-threonylcarbamoyladenosine(37) in tRNA + S-adenosyl-L-methionine = N(6)-methyl,N(6)-L-threonylcarbamoyladenosine(37) in tRNA + S-adenosyl-L-homocysteine + H(+). Its function is as follows. S-adenosyl-L-methionine-dependent methyltransferase responsible for the addition of the methyl group in the formation of N6-methyl-N6-threonylcarbamoyladenosine at position 37 (m(6)t(6)A37) of the tRNA anticodon loop of tRNA(Ser)(GCU). The methyl group of m(6)t(6)A37 may improve the efficiency of the tRNA decoding ability. The polypeptide is tRNA (adenine(37)-N6)-methyltransferase (Homo sapiens (Human)).